We begin with the raw amino-acid sequence, 273 residues long: MYRDYGEPGPSSGAGSPYGRPAQPPQAQAQTAQQQKFHLVPSIDSSSQELHWMVQPHFLGPTGYPRPLAYPQYSPPQPRPGVIRALGPPPGVRRRPCEQISPEEEERRRVRRERNKLAAAKCRNRRKELTDFLQAETDKLEDEKSGLQREIEELQKQKERLELVLEAHRPICKIPEGDKKDPGGSGSTSGASSPPAPGRPVPCISLSPGPVLEPEALHTPTLMTTPSLTPFTPSLVFTYPSTPEPCSSAHRKSSSSSGDPSSDPLGSPTLLAL.

2 disordered regions span residues 1 to 46 (MYRD…IDSS) and 60 to 114 (GPTG…RRER). Positions 7 to 35 (EPGPSSGAGSPYGRPAQPPQAQAQTAQQQ) are enriched in low complexity. Residues 105 to 168 (EERRRVRRER…ERLELVLEAH (64 aa)) enclose the bZIP domain. Residues 107–127 (RRRVRRERNKLAAAKCRNRRK) are basic motif. The interval 133-161 (LQAETDKLEDEKSGLQREIEELQKQKERL) is leucine-zipper. Basic and acidic residues predominate over residues 169–182 (RPICKIPEGDKKDP). A disordered region spans residues 169–273 (RPICKIPEGD…PLGSPTLLAL (105 aa)). 2 stretches are compositionally biased toward low complexity: residues 217-235 (LHTP…TPSL) and 254-273 (SSSS…LLAL). Serine 267 bears the Phosphoserine mark.

It belongs to the bZIP family. Fos subfamily. In terms of assembly, heterodimer. Interacts with the BAF multiprotein chromatin-remodeling complex subunits SMARCB1 and SMARCD1. Interacts with ARID1A and JUN.

It localises to the nucleus. This Mus musculus (Mouse) protein is Fos-related antigen 1 (Fosl1).